A 397-amino-acid polypeptide reads, in one-letter code: Elongation factor Tu 1 (397 aa).

The 197-residue stretch at Lys10 to Val206 folds into the tr-type G domain. The tract at residues Gly19 to Thr26 is G1. Gly19–Thr26 lines the GTP pocket. Position 26 (Thr26) interacts with Mg(2+). Residues Gly61–Ser65 are G2. A G3 region spans residues Asp82–Gly85. Residues Asp82–His86 and Asn137–Asp140 each bind GTP. The tract at residues Asn137–Asp140 is G4. The G5 stretch occupies residues Ser175 to Leu177.

Belongs to the TRAFAC class translation factor GTPase superfamily. Classic translation factor GTPase family. EF-Tu/EF-1A subfamily. Monomer.

The protein localises to the cytoplasm. It carries out the reaction GTP + H2O = GDP + phosphate + H(+). GTP hydrolase that promotes the GTP-dependent binding of aminoacyl-tRNA to the A-site of ribosomes during protein biosynthesis. The sequence is that of Elongation factor Tu 1 from Alkaliphilus metalliredigens (strain QYMF).